A 329-amino-acid polypeptide reads, in one-letter code: Phenylalanine--tRNA ligase alpha subunit (329 aa).

Glu-254 provides a ligand contact to Mg(2+).

This sequence belongs to the class-II aminoacyl-tRNA synthetase family. Phe-tRNA synthetase alpha subunit type 1 subfamily. As to quaternary structure, tetramer of two alpha and two beta subunits. It depends on Mg(2+) as a cofactor.

Its subcellular location is the cytoplasm. The catalysed reaction is tRNA(Phe) + L-phenylalanine + ATP = L-phenylalanyl-tRNA(Phe) + AMP + diphosphate + H(+). In Haemophilus influenzae (strain ATCC 51907 / DSM 11121 / KW20 / Rd), this protein is Phenylalanine--tRNA ligase alpha subunit (pheS).